The following is a 56-amino-acid chain: Large ribosomal subunit protein bL32 (56 aa).

Belongs to the bacterial ribosomal protein bL32 family.

The protein is Large ribosomal subunit protein bL32 of Brevibacillus brevis (strain 47 / JCM 6285 / NBRC 100599).